Reading from the N-terminus, the 113-residue chain is MADVEDGEEPCVLSSHSGSAGSKSGGDKMFSLKKWNAVAMWSWDVECDTCAICRVQVMDACLRCQAENKQEDCVVVWGECNHSFHNCCMSLWVKQNNRCPLCQQDWVVQRIGK.

The disordered stretch occupies residues 1 to 26 (MADVEDGEEPCVLSSHSGSAGSKSGG). At A2 the chain carries N-acetylalanine. 12 residues coordinate Zn(2+): C50, C53, C61, C64, C73, C80, H82, H85, C87, C88, C99, and C102. The RING-type zinc finger occupies 61–103 (CLRCQAENKQEDCVVVWGECNHSFHNCCMSLWVKQNNRCPLCQ).

Belongs to the RING-box family. Catalytic component of multiple cullin-5-RING E3 ubiquitin-protein ligase complexes (ECS complexes, also named CRL5 complexes) composed of CUL5, Elongin BC (ELOB and ELOC), RNF7/RBX2 and a variable SOCS box domain-containing protein as substrate-specific recognition component. Also interacts (with lower preference) with CUL1, CUL2, CUL3, CUL4A and CUL4B; additional evidence is however required to confirm this result in vivo. Interacts with UBE2F. Interacts with CSNK2B, the interaction is not affected by phosphorylation by CK2. May also interact with DCUN1D1, DCUN1D2, DCUN1D3, DCUN1D4 and DCUN1D5.

It is found in the cytoplasm. The protein resides in the nucleus. The catalysed reaction is S-ubiquitinyl-[E2 ubiquitin-conjugating enzyme]-L-cysteine + [acceptor protein]-L-lysine = [E2 ubiquitin-conjugating enzyme]-L-cysteine + N(6)-ubiquitinyl-[acceptor protein]-L-lysine.. The enzyme catalyses S-[NEDD8-protein]-yl-[E2 NEDD8-conjugating enzyme]-L-cysteine + [cullin]-L-lysine = [E2 NEDD8-conjugating enzyme]-L-cysteine + N(6)-[NEDD8-protein]-yl-[cullin]-L-lysine.. It functions in the pathway protein modification; protein ubiquitination. The protein operates within protein modification; protein neddylation. Functionally, catalytic component of multiple cullin-5-RING E3 ubiquitin-protein ligase complexes (ECS complexes), which mediate the ubiquitination and subsequent proteasomal degradation of target proteins. It is thereby involved in various biological processes, such as cell cycle progression, signal transduction and transcription. The functional specificity of the E3 ubiquitin-protein ligase ECS complexes depend on the variable SOCS box-containing substrate recognition component. Within ECS complexes, RNF7/RBX2 recruits the E2 ubiquitination enzyme to the complex via its RING-type and brings it into close proximity to the substrate. Catalytic subunit of various SOCS-containing ECS complexes, such as the ECS(SOCS7) complex, that regulate reelin signaling by mediating ubiquitination and degradation of DAB1. The ECS(SOCS2) complex mediates the ubiquitination and subsequent proteasomal degradation of phosphorylated EPOR and GHR. Promotes ubiquitination and degradation of NF1, thereby regulating Ras protein signal transduction. As part of the ECS(ASB9) complex, catalyzes ubiquitination and degradation of CKB. The ECS(SPSB3) complex catalyzes ubiquitination of nuclear CGAS. As part of the ECS(RAB40C) complex, mediates ANKRD28 ubiquitination and degradation, thereby inhibiting protein phosphatase 6 (PP6) complex activity and focal adhesion assembly during cell migration. As part of some ECS complex, catalyzes 'Lys-11'-linked ubiquitination and degradation of BTRC. ECS complexes and ARIH2 collaborate in tandem to mediate ubiquitination of target proteins; ARIH2 mediating addition of the first ubiquitin on CRLs targets. Specifically catalyzes the neddylation of CUL5 via its interaction with UBE2F. Does not catalyze neddylation of other cullins (CUL1, CUL2, CUL3, CUL4A or CUL4B). May play a role in protecting cells from apoptosis induced by redox agents. In Mus musculus (Mouse), this protein is RING-box protein 2.